The following is a 1131-amino-acid chain: Topless-related protein 2 (1131 aa).

In terms of domain architecture, LisH spans leucine 4–phenylalanine 36. The CTLH domain occupies phenylalanine 34–lysine 92. Residue threonine 214 is modified to Phosphothreonine. WD repeat units lie at residues arginine 345–threonine 385, glutamate 407–histidine 446, alanine 451–glutamate 493, histidine 495–aspartate 535, phenylalanine 585–valine 624, glycine 629–arginine 668, aspartate 763–threonine 802, asparagine 829–threonine 867, proline 870–lysine 910, glycine 913–serine 952, proline 959–lysine 999, and alanine 1005–arginine 1044. The disordered stretch occupies residues valine 1099–arginine 1131. The segment covering serine 1116–arginine 1131 has biased composition (low complexity).

In terms of assembly, tetramer. Interacts with NINJA/AFPH2. Interacts with SMXL6, SMXL7 and SMXL8. Interacts with SPL (via EAR motif). Interacts with SPEAR3/TIE1.

The protein localises to the nucleus. Its function is as follows. Transcriptional corepressor. Negative regulator of jasmonate responses. In Arabidopsis thaliana (Mouse-ear cress), this protein is Topless-related protein 2 (TPR2).